The primary structure comprises 1391 residues: DNA-directed RNA polymerase subunit beta (1391 aa).

Belongs to the RNA polymerase beta chain family. The RNAP catalytic core consists of 2 alpha, 1 beta, 1 beta' and 1 omega subunit. When a sigma factor is associated with the core the holoenzyme is formed, which can initiate transcription.

It catalyses the reaction RNA(n) + a ribonucleoside 5'-triphosphate = RNA(n+1) + diphosphate. DNA-dependent RNA polymerase catalyzes the transcription of DNA into RNA using the four ribonucleoside triphosphates as substrates. In Paramagnetospirillum magneticum (strain ATCC 700264 / AMB-1) (Magnetospirillum magneticum), this protein is DNA-directed RNA polymerase subunit beta.